The sequence spans 814 residues: Pre-rRNA-processing protein TSR1 homolog (814 aa).

A disordered region spans residues 1–67 (MADHAFHRPG…NQMNQLRKNK (67 aa)). Over residues 16–27 (NKAHKTGRHRSK) the composition is skewed to basic residues. The region spanning 84–249 (APFLVCLLPM…MRRIGGQKKR (166 aa)) is the Bms1-type G domain. Disordered regions lie at residues 316–357 (PYKL…DAEQ) and 392–448 (WIPD…EEFQ). A compositionally biased stretch (basic and acidic residues) spans 317-340 (YKLDKSRDGENSEVRLLDRSDPSK). Acidic residues predominate over residues 395-426 (DVEEVEDPDGKDDDDMSEDDDDDKEDDNEDFM). A compositionally biased stretch (basic and acidic residues) spans 431–442 (KSFEDEYEKRDS). Threonine 444 carries the phosphothreonine modification.

This sequence belongs to the TRAFAC class translation factor GTPase superfamily. Bms1-like GTPase family. TSR1 subfamily.

It is found in the nucleus. The protein localises to the nucleolus. In terms of biological role, required during maturation of the 40S ribosomal subunit in the nucleolus. This chain is Pre-rRNA-processing protein TSR1 homolog, found in Drosophila melanogaster (Fruit fly).